The chain runs to 427 residues: 3-phosphoshikimate 1-carboxyvinyltransferase (427 aa).

Residues K20, S21, and R25 each contribute to the 3-phosphoshikimate site. Residue K20 participates in phosphoenolpyruvate binding. Residues G92 and R120 each contribute to the phosphoenolpyruvate site. 3-phosphoshikimate-binding residues include S166, Q168, D312, and K339. Phosphoenolpyruvate is bound at residue Q168. D312 acts as the Proton acceptor in catalysis. Phosphoenolpyruvate is bound by residues R343 and R385.

The protein belongs to the EPSP synthase family. Monomer.

Its subcellular location is the cytoplasm. It carries out the reaction 3-phosphoshikimate + phosphoenolpyruvate = 5-O-(1-carboxyvinyl)-3-phosphoshikimate + phosphate. Its pathway is metabolic intermediate biosynthesis; chorismate biosynthesis; chorismate from D-erythrose 4-phosphate and phosphoenolpyruvate: step 6/7. Functionally, catalyzes the transfer of the enolpyruvyl moiety of phosphoenolpyruvate (PEP) to the 5-hydroxyl of shikimate-3-phosphate (S3P) to produce enolpyruvyl shikimate-3-phosphate and inorganic phosphate. The sequence is that of 3-phosphoshikimate 1-carboxyvinyltransferase from Streptococcus pneumoniae (strain 70585).